We begin with the raw amino-acid sequence, 484 residues long: Glutamyl-tRNA(Gln) amidotransferase subunit A (484 aa).

Residues lysine 77 and serine 152 each act as charge relay system in the active site. Catalysis depends on serine 176, which acts as the Acyl-ester intermediate.

The protein belongs to the amidase family. GatA subfamily. In terms of assembly, heterotrimer of A, B and C subunits.

The catalysed reaction is L-glutamyl-tRNA(Gln) + L-glutamine + ATP + H2O = L-glutaminyl-tRNA(Gln) + L-glutamate + ADP + phosphate + H(+). Allows the formation of correctly charged Gln-tRNA(Gln) through the transamidation of misacylated Glu-tRNA(Gln) in organisms which lack glutaminyl-tRNA synthetase. The reaction takes place in the presence of glutamine and ATP through an activated gamma-phospho-Glu-tRNA(Gln). The protein is Glutamyl-tRNA(Gln) amidotransferase subunit A of Lacticaseibacillus casei (strain BL23) (Lactobacillus casei).